Consider the following 130-residue polypeptide: Small ribosomal subunit protein uS8 (130 aa).

This sequence belongs to the universal ribosomal protein uS8 family. As to quaternary structure, part of the 30S ribosomal subunit.

Functionally, one of the primary rRNA binding proteins, it binds directly to 16S rRNA central domain where it helps coordinate assembly of the platform of the 30S subunit. The protein is Small ribosomal subunit protein uS8 of Caldivirga maquilingensis (strain ATCC 700844 / DSM 13496 / JCM 10307 / IC-167).